The following is a 254-amino-acid chain: Mitochondrial cardiolipin hydrolase (254 aa).

The Mitochondrial intermembrane portion of the chain corresponds to 1–9; the sequence is MERFRWQVA. The tract at residues 1 to 43 is required for mitochondrial localization; it reads MERFRWQVAAVAAVGLALALEALPSVLCWLRAGRRQQQRPPRR. Residues 10–32 traverse the membrane as a helical segment; it reads AVAAVGLALALEALPSVLCWLRA. Residues 33 to 254 are Cytoplasmic-facing; it reads GRRQQQRPPR…SKCSHHLSQV (222 aa). The C3H1-type; atypical zinc-finger motif lies at 49 to 82; it reads PSQVTCTEALLQAPGEAPSGPPAGCRCSLPHGES. The 28-residue stretch at 155 to 182 folds into the PLD phosphodiesterase domain; that stretch reads DLGYMHHKFAIVDKKVLITGSLNWTTQA. Active-site residues include H160, K162, and D167.

The protein belongs to the phospholipase D family. MitoPLD/Zucchini subfamily. Homodimer. Interacts with MOV10L1. Interacts with MIGA1 and MIGA2; possibly facilitating homodimer formation. Interacts with GK2.

Its subcellular location is the mitochondrion outer membrane. The protein resides in the nucleus membrane. It localises to the cell membrane. It is found in the golgi apparatus. The catalysed reaction is a cardiolipin + H2O = a 1,2-diacyl-sn-glycero-3-phospho-(1'-sn-glycerol) + a 1,2-diacyl-sn-glycero-3-phosphate + H(+). Single stranded DNA (ssDNA) hydrolase activity does not depend upon, but is stimulated by the presence of Ca(2+) and Mn(2+). MIGA1 and MIGA2 increase PLD6 self-association affinity and affects the homodimer conformation facilitating its phospholipase activity over the nuclease activity. MYC induces its expression and stimulates its phospholipase activity. Presents phospholipase and nuclease activities, depending on the different physiological conditions. Interaction with Mitoguardin (MIGA1 or MIGA2) affects the dimer conformation, facilitating the lipase activity over the nuclease activity. Plays a key role in mitochondrial fusion and fission via its phospholipase activity. In its phospholipase role, it uses the mitochondrial lipid cardiolipin as substrate to generate phosphatidate (PA or 1,2-diacyl-sn-glycero-3-phosphate), a second messenger signaling lipid. Production of PA facilitates Mitofusin-mediated fusion, whereas the cleavage of PA by the Lipin family of phosphatases produces diacylgycerol (DAG) which promotes mitochondrial fission. Both Lipin and DAG regulate mitochondrial dynamics and membrane fusion/fission, important processes for adapting mitochondrial metabolism to changes in cell physiology. Mitochondrial fusion enables cells to cope with the increased nucleotide demand during DNA synthesis. Mitochondrial function and dynamics are closely associated with biological processes such as cell growth, proliferation, and differentiation. Mediator of MYC activity, promotes mitochondrial fusion and activates AMPK which in turn inhibits YAP/TAZ, thereby inducing cell growth and proliferation. The endonuclease activity plays a critical role in PIWI-interacting RNA (piRNA) biogenesis during spermatogenesis. Implicated in spermatogenesis and sperm fertility in testicular germ cells, its single strand-specific nuclease activity is critical for the biogenesis/maturation of PIWI-interacting RNA (piRNA). MOV10L1 selectively binds to piRNA precursors and funnels them to the endonuclease that catalyzes the first cleavage step of piRNA processing to generate piRNA intermediate fragments that are subsequently loaded to Piwi proteins. Cleaves either DNA or RNA substrates with similar affinity, producing a 5' phosphate end, in this way it participates in the processing of primary piRNA transcripts. piRNAs provide essential protection against the activity of mobile genetic elements. piRNA-mediated transposon silencing is thus critical for maintaining genome stability, in particular in germline cells when transposons are mobilized as a consequence of wide-spread genomic demethylation. PA may act as signaling molecule in the recognition/transport of the precursor RNAs of primary piRNAs. Interacts with tesmin in testes, suggesting a role in spermatogenesis via association with its interacting partner. The chain is Mitochondrial cardiolipin hydrolase (PLD6) from Canis lupus familiaris (Dog).